We begin with the raw amino-acid sequence, 303 residues long: Phytochrome-associated serine/threonine-protein phosphatase 3 (303 aa).

Zn(2+)-binding residues include Asp50, His52, Asp78, and Asn110. His111 acts as the Proton donor in catalysis. The Zn(2+) site is built by His160 and His234.

This sequence belongs to the PPP phosphatase family. PP-6 (PP-V) subfamily. As to quaternary structure, interacts with PHYA and PHYB, mostly when they are phosphorylated and in Pfr forms. Interacts with TAP46. Interacts with NRP. Interacts with PIN1 and PIN2. Interacts with ABI5. Interacts with PIF3 and PIF4. Protein phosphatase 6 (PP6) holoenzyme is a heterotrimeric complex formed by the catalytic subunit FYPP, a SAPS domain-containing subunit (SAL) and a protein phosphatase 2A regulatory subunit A (PP2AA). Zn(2+) is required as a cofactor. Mostly expressed in flowers. Also detected to a lower extent in stems and leaves. Expressed in roots.

It is found in the cytoplasm. The catalysed reaction is O-phospho-L-seryl-[protein] + H2O = L-seryl-[protein] + phosphate. The enzyme catalyses O-phospho-L-threonyl-[protein] + H2O = L-threonyl-[protein] + phosphate. Its function is as follows. Catalytic subunit of protein phosphatase 6 (PP6). Dephosphorylates phosphorylated phytochromes, with a preference toward Pfr forms. Plays a major role in the photoperiodic control of flowering time in long days by modulating phytochrome signals in flowering time control. Involved in the regulation of polar auxin transport in roots. Dephosphorylates directly the auxin efflux carriers PIN1 and PIN2, thus promoting their proper polar localization in root cell plasma membrane. Acts antagonistically with the protein kinase PID to regulate the reversible phosphorylation of PIN and polar targeting, subsequently impacting polar auxin transport and plant development. Involved in the regulation of abscisic acid (ABA) signaling during seed germination and postgermination seedling growth. Functions as a negative regulator of ABA signaling through direct dephosphorylation and destabilization of ABI5 protein. Acts antagonistically with the protein kinase SRK2E/SNRK2.6 to regulate ABI5 phosphorylation and ABA responses. Involved in the regulation of phosphorylation status in hypocotyl phototropism. Involved in the negative regulation of photomorphogenesis by controlling the stability and transcriptional activity of PIF3 and PIF4 proteins in the dark, via the regulation of their phosphorylation status. This chain is Phytochrome-associated serine/threonine-protein phosphatase 3, found in Arabidopsis thaliana (Mouse-ear cress).